The following is a 117-amino-acid chain: Large ribosomal subunit protein bL20c (117 aa).

This sequence belongs to the bacterial ribosomal protein bL20 family.

The protein resides in the plastid. Its subcellular location is the chloroplast. Binds directly to 23S ribosomal RNA and is necessary for the in vitro assembly process of the 50S ribosomal subunit. It is not involved in the protein synthesizing functions of that subunit. The protein is Large ribosomal subunit protein bL20c of Gossypium hirsutum (Upland cotton).